The following is a 96-amino-acid chain: Protein RnfH (96 aa).

The protein belongs to the UPF0125 (RnfH) family.

The polypeptide is Protein RnfH (Escherichia coli O17:K52:H18 (strain UMN026 / ExPEC)).